The sequence spans 647 residues: MIKITFPDGAVREFESGVTTFEIAQSISNSLAKKALAGKFNGKLIDTTRAITEDGAIEIVTPDHEDALDILRHSAAHLFAQAARRLFPDIHLGVGPAIQDGFYYDTDNEAGQISNEDLPRIEEEMKKIVKENFPSIREEVTKDEAREIFKNDPYKLELIEEHSEDEGGLTIYRQSEYVDLCRGPHVPSTGRIQIFHLLNVAGAYWRGNSDNAMMQRVYGTAWFDKKDLKKYLQMREEAKERDHRKLGKELDLFMISQEVGQGLPFWLPNGATVRRELERYIVDKELASGYQHVYTPPLASVELYKTSGHWEHYQEDMFPTMDMGDGEEFVLRPMNCPHHIQVYKHHVHSYRELPIRIAEIGMMHRYEKSGALTGLQRVREMSLNDGHLFVTPEQIQEEFQRALQLIIDVYADFNLTEYRFRLSLRDPQDTHKYFDNDEMWENAQTMLRAALDEMGVDFFEAEGEAAFYGPKLDIQVKTALGNEETLSTIQLDFLLPERFDLKYVGADGEEHRPVMIHRGVISTMERFTAILIENYKGAFPTWLAPHQVTLIPVSNEAHIDYAWQVAKKLRDKGVRADVDERNEKMQYKIRASQTSKIPYQLIVGDKEVEDGTVNVRRYGQKETHTVAVDEFVEQILADIASKSRLEK.

The region spanning 1 to 61 is the TGS domain; the sequence is MIKITFPDGA…TEDGAIEIVT (61 aa). The catalytic stretch occupies residues 242 to 540; that stretch reads DHRKLGKELD…LIENYKGAFP (299 aa). Zn(2+)-binding residues include Cys336, His387, and His517.

It belongs to the class-II aminoacyl-tRNA synthetase family. In terms of assembly, homodimer. Requires Zn(2+) as cofactor.

It localises to the cytoplasm. The enzyme catalyses tRNA(Thr) + L-threonine + ATP = L-threonyl-tRNA(Thr) + AMP + diphosphate + H(+). Catalyzes the attachment of threonine to tRNA(Thr) in a two-step reaction: L-threonine is first activated by ATP to form Thr-AMP and then transferred to the acceptor end of tRNA(Thr). Also edits incorrectly charged L-seryl-tRNA(Thr). This chain is Threonine--tRNA ligase, found in Streptococcus sanguinis (strain SK36).